Reading from the N-terminus, the 179-residue chain is UPF0302 protein EF_1554 (179 aa).

Belongs to the UPF0302 family.

The polypeptide is UPF0302 protein EF_1554 (Enterococcus faecalis (strain ATCC 700802 / V583)).